A 236-amino-acid polypeptide reads, in one-letter code: Elastase-1 (236 aa).

Residues 1–236 form the Peptidase S1 domain; it reads VVGGRVAQPN…AYISWMNGIM (236 aa). C30 and C46 are oxidised to a cystine. H45 acts as the Charge relay system in catalysis. Ca(2+) contacts are provided by E59, N61, T64, E66, and E69. D93 serves as the catalytic Charge relay system. 3 cysteine pairs are disulfide-bonded: C127-C193, C158-C174, and C183-C213. Catalysis depends on S187, which acts as the Charge relay system.

The protein belongs to the peptidase S1 family. Elastase subfamily. The cofactor is Ca(2+). Pancreas.

The protein localises to the secreted. It catalyses the reaction Hydrolysis of proteins, including elastin. Preferential cleavage: Ala-|-Xaa.. Functionally, acts upon elastin. This is Elastase-1 from Salmo salar (Atlantic salmon).